Here is a 335-residue protein sequence, read N- to C-terminus: N-acetyl-gamma-glutamyl-phosphate reductase (335 aa).

Residue cysteine 155 is part of the active site.

Belongs to the NAGSA dehydrogenase family. Type 1 subfamily.

The protein resides in the cytoplasm. It catalyses the reaction N-acetyl-L-glutamate 5-semialdehyde + phosphate + NADP(+) = N-acetyl-L-glutamyl 5-phosphate + NADPH + H(+). It functions in the pathway amino-acid biosynthesis; L-arginine biosynthesis; N(2)-acetyl-L-ornithine from L-glutamate: step 3/4. Functionally, catalyzes the NADPH-dependent reduction of N-acetyl-5-glutamyl phosphate to yield N-acetyl-L-glutamate 5-semialdehyde. The sequence is that of N-acetyl-gamma-glutamyl-phosphate reductase from Pasteurella multocida (strain Pm70).